The following is a 191-amino-acid chain: GTP-binding protein CIN4 (191 aa).

Residues 23–30 (GLDNSGKS), 69–73 (DIGGQ), and 131–134 (NKID) each bind GTP.

Implicated in yeast microtubule function. This chain is GTP-binding protein CIN4 (CIN4), found in Saccharomyces cerevisiae (strain ATCC 204508 / S288c) (Baker's yeast).